A 994-amino-acid polypeptide reads, in one-letter code: MGGLKLPPQTLHGIHGGRRPLTAPSSKPSFTIQPNYSSSISTGFTTRNVALFSPSIFPCGYFILGGARERRFGARNTQASVQPVTEELVEDKTKENPVSGDAIRRRFLEFYASRSHKVLPSASLVPDDPTVLLTIAGMLQFKPIFLGKAPRQVPRATTAQKCIRTNDVENVGRTTRHHTFFEMLGNFSFGDYFKKEAIKWAWELSTKEFGLPADRLWVSVYEDDDEAFEIWHDEVGVPVERIKRMGEEDNFWTSGATGPCGPCSELYYDFHPERGYKNTDLGDDSRFIEFYNLVFMQYNKMDDGSLEPLKQKNIDTGLGLERLARILQKVPNNYETDLIYPIIEKAAELANISYALADDRTKMNLKIIGDHLRAIVYLISDGVLPSNIGRGYVVRRLIRRAVRTGRLLGVKGGGEDGVFLPAIAEKVIELSPHIDPDVKARGHSILDELQREELRFVQTLERGEKLLDQMLAEALLNAQKSETLPCLSGKDVFLLYDTFGFPVEITTEVAEEQGVKIDMDGFEVEMENQRRQSQAAHNVVKLAVENGGDLAENVHDTEFLGYDTLSARAVVESLLLNGKSVIQVSEGSEVEVLLNKTPFYAESGGQIGDHGFLYVTQDQSKQTAVVEIKDVQKSLGSVFVHKGTIREGVLEVGREVEAAVDAKLRQRAKVHHTATHLLQSALKKVIGQETSQAGSLVAFDRLRFDFNFHRPLHDSELEEIENLINGWIGDGTLLQTKVMSLTDAKEAGAIAMFGEKYGEQVRVVEVPGVSMELCGGTHVSNTSEIRAFKIISEQGIASGIRRIEAVAGEAFIEYINARDSQMKLLCSTLKVKAEEVTTRVDNLLEELRTVRNEVSALRAKAAVYKASMIASKAFSVGTSKTIRVLVESMDDFDADALKSAAEYLMDTLQDPAAIILGSCPDEGKVSLVAAFTPGVVDIGIQAGKFIGPIAKLCGGGGGGRPNFAQAGGRKPENLTNALEKARTDLILILTEKAN.

Residues 1 to 29 (MGGLKLPPQTLHGIHGGRRPLTAPSSKPS) form a disordered region. The Zn(2+) site is built by histidine 672, histidine 676, cysteine 774, and histidine 778.

It belongs to the class-II aminoacyl-tRNA synthetase family. Monomer. Zn(2+) serves as cofactor.

The protein resides in the plastid. It is found in the chloroplast. Its subcellular location is the mitochondrion. The catalysed reaction is tRNA(Ala) + L-alanine + ATP = L-alanyl-tRNA(Ala) + AMP + diphosphate. Its function is as follows. Catalyzes the attachment of alanine to tRNA(Ala) in a two-step reaction: alanine is first activated by ATP to form Ala-AMP and then transferred to the acceptor end of tRNA(Ala). Also edits incorrectly charged tRNA(Ala) via its editing domain. The polypeptide is Alanine--tRNA ligase, chloroplastic/mitochondrial (Populus trichocarpa (Western balsam poplar)).